A 251-amino-acid chain; its full sequence is Triosephosphate isomerase (251 aa).

Residue 9–11 (NWK) participates in substrate binding. H95 acts as the Electrophile in catalysis. Catalysis depends on E167, which acts as the Proton acceptor. Residues G173, S213, and 234-235 (GG) contribute to the substrate site.

It belongs to the triosephosphate isomerase family. In terms of assembly, homodimer.

The protein resides in the cytoplasm. It catalyses the reaction D-glyceraldehyde 3-phosphate = dihydroxyacetone phosphate. It functions in the pathway carbohydrate biosynthesis; gluconeogenesis. Its pathway is carbohydrate degradation; glycolysis; D-glyceraldehyde 3-phosphate from glycerone phosphate: step 1/1. In terms of biological role, involved in the gluconeogenesis. Catalyzes stereospecifically the conversion of dihydroxyacetone phosphate (DHAP) to D-glyceraldehyde-3-phosphate (G3P). The sequence is that of Triosephosphate isomerase from Pelobacter propionicus (strain DSM 2379 / NBRC 103807 / OttBd1).